The following is a 275-amino-acid chain: Large ribosomal subunit protein uL2 (275 aa).

Residues 223–260 (VAMNPVDHPHGGGEGRTSGGRHPVSPWGLPTKGYKTRS) form a disordered region.

The protein belongs to the universal ribosomal protein uL2 family. In terms of assembly, part of the 50S ribosomal subunit. Forms a bridge to the 30S subunit in the 70S ribosome.

Functionally, one of the primary rRNA binding proteins. Required for association of the 30S and 50S subunits to form the 70S ribosome, for tRNA binding and peptide bond formation. It has been suggested to have peptidyltransferase activity; this is somewhat controversial. Makes several contacts with the 16S rRNA in the 70S ribosome. In Legionella pneumophila (strain Lens), this protein is Large ribosomal subunit protein uL2.